The sequence spans 119 residues: Putative mating-type protein A2 (119 aa).

Residues 38-100 (KPYRGHRFTK…NRRRKEKTIT (63 aa)) constitute a DNA-binding region (homeobox; TALE-type).

The protein belongs to the TALE/M-ATYP homeobox family.

Its subcellular location is the nucleus. In terms of biological role, probably not a functional protein. Cells lacking A2 show no obvious alterations in mating, sporulation and cell growth. The polypeptide is Putative mating-type protein A2 (MATA2) (Saccharomyces cerevisiae (Baker's yeast)).